We begin with the raw amino-acid sequence, 95 residues long: Protein TusB (95 aa).

It belongs to the DsrH/TusB family. Heterohexamer, formed by a dimer of trimers. The hexameric TusBCD complex contains 2 copies each of TusB, TusC and TusD. The TusBCD complex interacts with TusE.

It localises to the cytoplasm. Part of a sulfur-relay system required for 2-thiolation of 5-methylaminomethyl-2-thiouridine (mnm(5)s(2)U) at tRNA wobble positions. The chain is Protein TusB from Pectobacterium atrosepticum (strain SCRI 1043 / ATCC BAA-672) (Erwinia carotovora subsp. atroseptica).